The chain runs to 352 residues: Biotin synthase (352 aa).

The Radical SAM core domain maps to 41-268; sequence NEVQVSTLLS…ASHVRLSAGR (228 aa). The [4Fe-4S] cluster site is built by Cys56, Cys60, and Cys63. Residues Cys100, Cys131, Cys191, and Arg263 each contribute to the [2Fe-2S] cluster site.

The protein belongs to the radical SAM superfamily. Biotin synthase family. As to quaternary structure, homodimer. It depends on [4Fe-4S] cluster as a cofactor. The cofactor is [2Fe-2S] cluster.

It carries out the reaction (4R,5S)-dethiobiotin + (sulfur carrier)-SH + 2 reduced [2Fe-2S]-[ferredoxin] + 2 S-adenosyl-L-methionine = (sulfur carrier)-H + biotin + 2 5'-deoxyadenosine + 2 L-methionine + 2 oxidized [2Fe-2S]-[ferredoxin]. It participates in cofactor biosynthesis; biotin biosynthesis; biotin from 7,8-diaminononanoate: step 2/2. Catalyzes the conversion of dethiobiotin (DTB) to biotin by the insertion of a sulfur atom into dethiobiotin via a radical-based mechanism. The protein is Biotin synthase of Marinobacter nauticus (strain ATCC 700491 / DSM 11845 / VT8) (Marinobacter aquaeolei).